A 275-amino-acid chain; its full sequence is Fructose-2,6-bisphosphatase TIGAR (275 aa).

The Tele-phosphohistidine intermediate role is filled by His11. Glu89 acts as the Proton donor/acceptor in catalysis.

The protein belongs to the phosphoglycerate mutase family.

The protein resides in the cytoplasm. It localises to the nucleus. It is found in the mitochondrion. The catalysed reaction is beta-D-fructose 2,6-bisphosphate + H2O = beta-D-fructose 6-phosphate + phosphate. In terms of biological role, fructose-bisphosphatase hydrolyzing fructose-2,6-bisphosphate as well as fructose-1,6-bisphosphate. Acts as a negative regulator of glycolysis by lowering intracellular levels of fructose-2,6-bisphosphate in a p53/TP53-dependent manner, resulting in the pentose phosphate pathway (PPP) activation and NADPH production. Contributes to the generation of reduced glutathione to cause a decrease in intracellular reactive oxygen species (ROS) content, correlating with its ability to protect cells from oxidative or metabolic stress-induced cell death. May play a role in mitophagy inhibition. This Xenopus laevis (African clawed frog) protein is Fructose-2,6-bisphosphatase TIGAR.